Reading from the N-terminus, the 262-residue chain is Nickel import ATP-binding protein NikD (262 aa).

Positions 6-249 (LAIEGLTATT…PGHEVTRMLV (244 aa)) constitute an ABC transporter domain. 42 to 49 (GASGSGKS) is an ATP binding site.

This sequence belongs to the ABC transporter superfamily. Nickel importer (TC 3.A.1.5.3) family. As to quaternary structure, the complex is composed of two ATP-binding proteins (NikD and NikE), two transmembrane proteins (NikB and NikC) and a solute-binding protein (NikA).

The protein resides in the cell inner membrane. The enzyme catalyses Ni(2+)(out) + ATP + H2O = Ni(2+)(in) + ADP + phosphate + H(+). Its function is as follows. Part of the ABC transporter complex NikABCDE involved in nickel import. Responsible for energy coupling to the transport system. The chain is Nickel import ATP-binding protein NikD from Brucella suis biovar 1 (strain 1330).